The sequence spans 216 residues: Ras-related protein RABE1c (216 aa).

22-29 lines the GTP pocket; the sequence is GDSGVGKS. The Effector region motif lies at 44–52; that stretch reads FITTIGIDF. Residues 70–74, 128–131, and 159–160 contribute to the GTP site; these read DTAGQ, NKAD, and SA. S-geranylgeranyl cysteine attachment occurs at residues C213 and C214.

The protein belongs to the small GTPase superfamily. Rab family. As to quaternary structure, interacts with PI5K2.

The protein resides in the golgi apparatus membrane. It localises to the cell membrane. In terms of biological role, involved in membrane trafficking from the Golgi to the plasma membrane. The chain is Ras-related protein RABE1c (RABE1C) from Arabidopsis thaliana (Mouse-ear cress).